The primary structure comprises 219 residues: uncharacterized protein (219 aa).

One can recognise an ACT domain in the interval 4–79; the sequence is GLRIIAENKI…YIIEIEEEES (76 aa).

This is an uncharacterized protein from Archaeoglobus fulgidus (strain ATCC 49558 / DSM 4304 / JCM 9628 / NBRC 100126 / VC-16).